A 506-amino-acid polypeptide reads, in one-letter code: Probable lipid II flippase MurJ (506 aa).

13 consecutive transmembrane segments (helical) span residues 4–24, 86–106, 127–147, 153–173, 181–201, 232–252, 263–283, 308–328, 345–365, 377–397, 405–425, 436–456, and 474–494; these read YVVS…MGFV, TVIT…IIFA, VFGY…FVSV, IFFI…LSIF, IYSA…IPFA, IFGF…ASTL, AVVY…TVIF, ILLL…DYIL, TASV…FGFF, TPFY…VFGI, LALA…FIIL, ILFV…IYFF, and LMAA…VLGI.

The protein belongs to the MurJ/MviN family.

It is found in the cell inner membrane. It functions in the pathway cell wall biogenesis; peptidoglycan biosynthesis. Functionally, involved in peptidoglycan biosynthesis. Transports lipid-linked peptidoglycan precursors from the inner to the outer leaflet of the cytoplasmic membrane. This chain is Probable lipid II flippase MurJ, found in Borreliella burgdorferi (strain ATCC 35210 / DSM 4680 / CIP 102532 / B31) (Borrelia burgdorferi).